The sequence spans 64 residues: Large ribosomal subunit protein bL35c (64 aa).

The protein belongs to the bacterial ribosomal protein bL35 family.

The protein resides in the plastid. It is found in the chloroplast. The protein is Large ribosomal subunit protein bL35c of Thalassiosira pseudonana (Marine diatom).